A 393-amino-acid chain; its full sequence is Lipoyl synthase, mitochondrial (393 aa).

Cys-115, Cys-120, Cys-126, Cys-146, Cys-150, Cys-153, and Ser-362 together coordinate [4Fe-4S] cluster. A Radical SAM core domain is found at 131 to 351 (ETGTATATIM…RILGMDMGFR (221 aa)).

It belongs to the radical SAM superfamily. Lipoyl synthase family. [4Fe-4S] cluster is required as a cofactor.

It localises to the mitochondrion. The catalysed reaction is [[Fe-S] cluster scaffold protein carrying a second [4Fe-4S](2+) cluster] + N(6)-octanoyl-L-lysyl-[protein] + 2 oxidized [2Fe-2S]-[ferredoxin] + 2 S-adenosyl-L-methionine + 4 H(+) = [[Fe-S] cluster scaffold protein] + N(6)-[(R)-dihydrolipoyl]-L-lysyl-[protein] + 4 Fe(3+) + 2 hydrogen sulfide + 2 5'-deoxyadenosine + 2 L-methionine + 2 reduced [2Fe-2S]-[ferredoxin]. It participates in protein modification; protein lipoylation via endogenous pathway; protein N(6)-(lipoyl)lysine from octanoyl-[acyl-carrier-protein]: step 2/2. Catalyzes the radical-mediated insertion of two sulfur atoms into the C-6 and C-8 positions of the octanoyl moiety bound to the lipoyl domains of lipoate-dependent enzymes, thereby converting the octanoylated domains into lipoylated derivatives. The polypeptide is Lipoyl synthase, mitochondrial (Vitis vinifera (Grape)).